The chain runs to 173 residues: Photosystem I assembly protein Ycf3 (173 aa).

TPR repeat units lie at residues 35–68 (AYLY…EDNQ), 72–105 (GETL…NPKQ), and 120–153 (GRMA…YPGG).

Belongs to the Ycf3 family.

It localises to the cellular thylakoid membrane. Its function is as follows. Essential for the assembly of the photosystem I (PSI) complex. May act as a chaperone-like factor to guide the assembly of the PSI subunits. The protein is Photosystem I assembly protein Ycf3 of Prochlorococcus marinus (strain NATL1A).